Reading from the N-terminus, the 900-residue chain is Probable dipeptidyl-aminopeptidase B (900 aa).

The interval methionine 1 to serine 83 is disordered. Residues methionine 1–arginine 90 lie on the Cytoplasmic side of the membrane. Positions asparagine 24–phenylalanine 39 are enriched in low complexity. Residues asparagine 44–proline 55 show a composition bias toward polar residues. The chain crosses the membrane as a helical; Signal-anchor for type II membrane protein span at residues tryptophan 91–tryptophan 111. The Vacuolar segment spans residues glycine 112–threonine 900. Asparagine 150, asparagine 195, asparagine 348, asparagine 410, asparagine 514, asparagine 639, and asparagine 644 each carry an N-linked (GlcNAc...) asparagine glycan. Serine 753 acts as the Charge relay system in catalysis. A glycan (N-linked (GlcNAc...) asparagine) is linked at asparagine 812. Active-site charge relay system residues include aspartate 830 and histidine 863.

This sequence belongs to the peptidase S9B family.

Its subcellular location is the vacuole membrane. It carries out the reaction Release of an N-terminal dipeptide, Xaa-Yaa-|-Zaa-, from a polypeptide, preferentially when Yaa is Pro, provided Zaa is neither Pro nor hydroxyproline.. Type IV dipeptidyl-peptidase which removes N-terminal dipeptides sequentially from polypeptides having unsubstituted N-termini provided that the penultimate residue is proline. The protein is Probable dipeptidyl-aminopeptidase B (dapB) of Talaromyces stipitatus (strain ATCC 10500 / CBS 375.48 / QM 6759 / NRRL 1006) (Penicillium stipitatum).